Here is a 199-residue protein sequence, read N- to C-terminus: Recombination protein RecR (199 aa).

The C4-type zinc finger occupies 57 to 72 (CSICGNITDKDPCYVC). Residues 80 to 176 (TIVCVVQDSR…RVTRIAHGLP (97 aa)) form the Toprim domain.

The protein belongs to the RecR family.

Functionally, may play a role in DNA repair. It seems to be involved in an RecBC-independent recombinational process of DNA repair. It may act with RecF and RecO. This is Recombination protein RecR from Exiguobacterium sibiricum (strain DSM 17290 / CCUG 55495 / CIP 109462 / JCM 13490 / 255-15).